The following is a 142-amino-acid chain: Putative transcriptional regulatory protein Mevan_1098 (142 aa).

Belongs to the Tfx family.

Its function is as follows. Putative transcriptional regulator. The chain is Putative transcriptional regulatory protein Mevan_1098 from Methanococcus vannielii (strain ATCC 35089 / DSM 1224 / JCM 13029 / OCM 148 / SB).